A 132-amino-acid polypeptide reads, in one-letter code: Small ribosomal subunit protein uS8 (132 aa).

The protein belongs to the universal ribosomal protein uS8 family. As to quaternary structure, part of the 30S ribosomal subunit. Contacts proteins S5 and S12.

Its function is as follows. One of the primary rRNA binding proteins, it binds directly to 16S rRNA central domain where it helps coordinate assembly of the platform of the 30S subunit. The protein is Small ribosomal subunit protein uS8 of Streptococcus agalactiae serotype Ia (strain ATCC 27591 / A909 / CDC SS700).